The primary structure comprises 298 residues: Acetate permease A (298 aa).

A disordered region spans residues 1-43 (MSAEQNHGLEKDVGGPAAPAAAAPNAPAAAPGAPPAGMSAEEH). Residues 14 to 37 (GGPAAPAAAAPNAPAAAPGAPPAG) show a composition bias toward low complexity. Helical transmembrane passes span 86–106 (APLG…INMG), 115–135 (IVIA…GMWE), 146–166 (ALSS…PGGF), 185–205 (SFGL…FCTL), 210–230 (AFFL…VGYI), and 245–265 (AGGF…LAGI).

The protein belongs to the acetate uptake transporter (AceTr) (TC 2.A.96) family.

The protein localises to the cell membrane. The protein resides in the vacuole membrane. High affinity monocarboxylate transporter (MCT) involved in acetate uptake. Unlike other activities involved in acetate utilization, acpA is dispensable for growth on the acetate precursor ethanol. The protein is Acetate permease A of Emericella nidulans (strain FGSC A4 / ATCC 38163 / CBS 112.46 / NRRL 194 / M139) (Aspergillus nidulans).